A 562-amino-acid chain; its full sequence is Glutamine--tRNA ligase (562 aa).

The short motif at 35 to 45 (PEPNGYLHIGH) is the 'HIGH' region element. Residues 36–38 (EPN) and 42–48 (HIGHAKS) each bind ATP. Asp-68 and Tyr-213 together coordinate L-glutamine. ATP is bound by residues Thr-232, 262 to 263 (RL), and 270 to 272 (LSK). The short motif at 269 to 273 (ILSKR) is the 'KMSKS' region element.

The protein belongs to the class-I aminoacyl-tRNA synthetase family. In terms of assembly, monomer.

The protein resides in the cytoplasm. The enzyme catalyses tRNA(Gln) + L-glutamine + ATP = L-glutaminyl-tRNA(Gln) + AMP + diphosphate. The sequence is that of Glutamine--tRNA ligase from Buchnera aphidicola subsp. Schizaphis graminum (strain Sg).